Reading from the N-terminus, the 419-residue chain is Histidine--tRNA ligase (419 aa).

The protein belongs to the class-II aminoacyl-tRNA synthetase family. In terms of assembly, homodimer.

Its subcellular location is the cytoplasm. It catalyses the reaction tRNA(His) + L-histidine + ATP = L-histidyl-tRNA(His) + AMP + diphosphate + H(+). This chain is Histidine--tRNA ligase, found in Methylobacillus flagellatus (strain ATCC 51484 / DSM 6875 / VKM B-1610 / KT).